Here is a 373-residue protein sequence, read N- to C-terminus: UDP-glucose 4-epimerase 3 (373 aa).

Position 27 to 58 (Ser-27 to Phe-58) interacts with NAD(+). Residue Ser-153 participates in substrate binding. The active-site Proton acceptor is the Tyr-177.

The protein belongs to the NAD(P)-dependent epimerase/dehydratase family. NAD(+) is required as a cofactor.

It carries out the reaction UDP-alpha-D-glucose = UDP-alpha-D-galactose. The protein operates within carbohydrate metabolism; galactose metabolism. In terms of biological role, catalyzes the interconversion between UDP-glucose and UDP-galactose. The protein is UDP-glucose 4-epimerase 3 (UGE-3) of Oryza sativa subsp. japonica (Rice).